Reading from the N-terminus, the 709-residue chain is Mucin-20 (709 aa).

Residues 1 to 25 (MGCLWGLALPLFFFCWEVGVSGSSA) form the signal peptide. Over residues 57 to 69 (TQTLSAETSSRAS) the composition is skewed to polar residues. Disordered regions lie at residues 57-92 (TQTLSAETSSRASTPAGPIPEAETRGAKRISPARET) and 170-403 (KGLS…WSPG). Positions 78–92 (AETRGAKRISPARET) are enriched in basic and acidic residues. Low complexity-rich tracts occupy residues 173-182 (SSESSASSDS), 190-199 (SRASESSASS), 209-218 (SRASESSASS), 228-237 (SRASESSASS), 247-256 (SRASESSASS), 266-275 (SRASESSASS), 285-294 (SRASESSASS), 304-313 (SRASESSASS), 323-332 (SRASESSASS), 342-351 (SRASESSASS), 361-370 (SRASESSASS), and 380-389 (SRASESSASS). 11 consecutive repeat copies span residues 173–192 (SSESSASSDSPHPVITPSRA), 193–211 (SESSASSDGPHPVITPSRA), 212–230 (SESSASSDGPHPVITPSRA), 231–249 (SESSASSDGPHPVITPSRA), 250–268 (SESSASSDGPHPVITPSRA), 269–287 (SESSASSDGPHPVITPSRA), 288–306 (SESSASSDGPHPVITPSRA), 307–325 (SESSASSDGPHPVITPSRA), 326–344 (SESSASSDGPHPVITPSRA), 345–363 (SESSASSDGLHPVITPSRA), and 364–382 (SESSASSDGPHPVITPSRA). A 12 X 20 AA approximate tandem repeats of S-S-E-S-S-A-S-S-D-S-P-H-P-V-I-T-P-S-R-A region spans residues 173 to 400 (SSESSASSDS…GPHPVITPSW (228 aa)). One copy of the 12; approximate repeat lies at 383–400 (SESSASSDGPHPVITPSW). N-linked (GlcNAc...) asparagine glycosylation occurs at Asn-423. 2 disordered regions span residues 434-515 (SSIP…APGA) and 583-657 (NFTP…VSAG). The involved in oligomerization stretch occupies residues 450 to 656 (VKASSTSDPP…RTRPTTDVSA (207 aa)). The span at 474–489 (VTASAETLSTAGTTES) shows a compositional bias: polar residues. The segment covering 613–652 (TTTNSSRGTNSTLAKITTSAKTTMKPPTATPTTARTRPTT) has biased composition (low complexity). Asn-616 and Asn-622 each carry an N-linked (GlcNAc...) asparagine glycan. The interval 657 to 709 (GENGGFLLLRLSVASPEDLTDPRVAERLMQQLHRELHAHAPHFQVSLLRVRRG) is interaction with MET.

In terms of assembly, interacts with MET; oligomerization increases affinity for MET. Highly expressed in kidney, moderately in placenta, lung, prostate, liver, and digestive system. In the kidney, localized in the proximal tubules but not in the glomerulus or distal tubules. Detected in most of the male urogenital tract epithelia, with the exception of epididymis.

It localises to the secreted. It is found in the apical cell membrane. The protein resides in the basolateral cell membrane. The protein localises to the cell projection. Its subcellular location is the microvillus membrane. In terms of biological role, may regulate MET signaling cascade. Seems to decrease hepatocyte growth factor (HGF)-induced transient MAPK activation. Blocks GRB2 recruitment to MET thus suppressing the GRB2-RAS pathway. Inhibits HGF-induced proliferation of MMP1 and MMP9 expression. This Homo sapiens (Human) protein is Mucin-20 (MUC20).